The primary structure comprises 194 residues: FMN-dependent NADH:quinone oxidoreductase 1 (194 aa).

Residues Ser9 and 85 to 88 contribute to the FMN site; that span reads MYNF.

The protein belongs to the azoreductase type 1 family. Homodimer. It depends on FMN as a cofactor.

The catalysed reaction is 2 a quinone + NADH + H(+) = 2 a 1,4-benzosemiquinone + NAD(+). It catalyses the reaction N,N-dimethyl-1,4-phenylenediamine + anthranilate + 2 NAD(+) = 2-(4-dimethylaminophenyl)diazenylbenzoate + 2 NADH + 2 H(+). Its function is as follows. Quinone reductase that provides resistance to thiol-specific stress caused by electrophilic quinones. Also exhibits azoreductase activity. Catalyzes the reductive cleavage of the azo bond in aromatic azo compounds to the corresponding amines. In Xanthomonas euvesicatoria pv. vesicatoria (strain 85-10) (Xanthomonas campestris pv. vesicatoria), this protein is FMN-dependent NADH:quinone oxidoreductase 1.